The chain runs to 931 residues: Bifunctional uridylyltransferase/uridylyl-removing enzyme (931 aa).

Residues 1 to 383 (MDSVATDSKA…TTGSTWRRVP (383 aa)) are uridylyltransferase. The uridylyl-removing stretch occupies residues 384–739 (ESDDFIVDNN…VGFDPARGVT (356 aa)). Positions 499 to 622 (VDEHLIRCIG…VQSVEQMKLL (124 aa)) constitute an HD domain. 2 consecutive ACT domains span residues 740-822 (ELTI…AVAR) and 851-931 (VIEV…QPAA).

It belongs to the GlnD family. It depends on Mg(2+) as a cofactor.

It catalyses the reaction [protein-PII]-L-tyrosine + UTP = [protein-PII]-uridylyl-L-tyrosine + diphosphate. The enzyme catalyses [protein-PII]-uridylyl-L-tyrosine + H2O = [protein-PII]-L-tyrosine + UMP + H(+). Uridylyltransferase (UTase) activity is inhibited by glutamine, while glutamine activates uridylyl-removing (UR) activity. In terms of biological role, modifies, by uridylylation and deuridylylation, the PII regulatory proteins (GlnB and homologs), in response to the nitrogen status of the cell that GlnD senses through the glutamine level. Under low glutamine levels, catalyzes the conversion of the PII proteins and UTP to PII-UMP and PPi, while under higher glutamine levels, GlnD hydrolyzes PII-UMP to PII and UMP (deuridylylation). Thus, controls uridylylation state and activity of the PII proteins, and plays an important role in the regulation of nitrogen fixation and metabolism. This Bradyrhizobium sp. (strain ORS 278) protein is Bifunctional uridylyltransferase/uridylyl-removing enzyme.